The primary structure comprises 168 residues: Cytochrome c oxidase subunit 2 (168 aa).

The Cytoplasmic segment spans residues 1-3 (MVD). The chain crosses the membrane as a helical span at residues 4–38 (EHKAHKAILAYEKGWLAFSLAMLFVFIALIAYTLA). Residues 39–168 (THTAGVIPAG…NMFGTIVVKE (130 aa)) lie on the Periplasmic side of the membrane. H114, C149, C153, and H157 together coordinate Cu cation.

The protein belongs to the cytochrome c oxidase subunit 2 family.

It is found in the cell membrane. The enzyme catalyses 4 Fe(II)-[cytochrome c] + O2 + 8 H(+)(in) = 4 Fe(III)-[cytochrome c] + 2 H2O + 4 H(+)(out). In terms of biological role, subunits I and II form the functional core of the enzyme complex. Electrons originating in cytochrome c are transferred via heme a and Cu(A) to the binuclear center formed by heme a3 and Cu(B). This Thermus thermophilus (strain ATCC 27634 / DSM 579 / HB8) protein is Cytochrome c oxidase subunit 2 (cbaB).